The primary structure comprises 229 residues: Urease accessory protein UreG (229 aa).

24 to 31 (GPVGSGKT) is a binding site for GTP.

It belongs to the SIMIBI class G3E GTPase family. UreG subfamily. As to quaternary structure, homodimer. UreD, UreF and UreG form a complex that acts as a GTP-hydrolysis-dependent molecular chaperone, activating the urease apoprotein by helping to assemble the nickel containing metallocenter of UreC. The UreE protein probably delivers the nickel.

It localises to the cytoplasm. In terms of biological role, facilitates the functional incorporation of the urease nickel metallocenter. This process requires GTP hydrolysis, probably effectuated by UreG. The chain is Urease accessory protein UreG from Albidiferax ferrireducens (strain ATCC BAA-621 / DSM 15236 / T118) (Rhodoferax ferrireducens).